A 99-amino-acid chain; its full sequence is NADH-quinone oxidoreductase subunit K (99 aa).

Helical transmembrane passes span 3–23 (PINY…GVLL), 28–48 (IVMF…FVTF), and 59–79 (MIAF…LAII).

It belongs to the complex I subunit 4L family. In terms of assembly, NDH-1 is composed of 14 different subunits. Subunits NuoA, H, J, K, L, M, N constitute the membrane sector of the complex.

It localises to the cell membrane. It catalyses the reaction a quinone + NADH + 5 H(+)(in) = a quinol + NAD(+) + 4 H(+)(out). In terms of biological role, NDH-1 shuttles electrons from NADH, via FMN and iron-sulfur (Fe-S) centers, to quinones in the respiratory chain. The immediate electron acceptor for the enzyme in this species is believed to be a menaquinone. Couples the redox reaction to proton translocation (for every two electrons transferred, four hydrogen ions are translocated across the cytoplasmic membrane), and thus conserves the redox energy in a proton gradient. The chain is NADH-quinone oxidoreductase subunit K from Mycobacterium avium (strain 104).